The chain runs to 101 residues: Large ribosomal subunit protein uL24 (101 aa).

The protein belongs to the universal ribosomal protein uL24 family. As to quaternary structure, part of the 50S ribosomal subunit.

Functionally, one of two assembly initiator proteins, it binds directly to the 5'-end of the 23S rRNA, where it nucleates assembly of the 50S subunit. Its function is as follows. One of the proteins that surrounds the polypeptide exit tunnel on the outside of the subunit. This Streptococcus thermophilus (strain ATCC BAA-491 / LMD-9) protein is Large ribosomal subunit protein uL24.